Here is a 507-residue protein sequence, read N- to C-terminus: Bifunctional purine biosynthesis protein PurH (507 aa).

Positions 1–144 (MKRALLSVSD…KNSDSVWAVV (144 aa)) constitute an MGS-like domain.

It belongs to the PurH family.

It catalyses the reaction (6R)-10-formyltetrahydrofolate + 5-amino-1-(5-phospho-beta-D-ribosyl)imidazole-4-carboxamide = 5-formamido-1-(5-phospho-D-ribosyl)imidazole-4-carboxamide + (6S)-5,6,7,8-tetrahydrofolate. The enzyme catalyses IMP + H2O = 5-formamido-1-(5-phospho-D-ribosyl)imidazole-4-carboxamide. The protein operates within purine metabolism; IMP biosynthesis via de novo pathway; 5-formamido-1-(5-phospho-D-ribosyl)imidazole-4-carboxamide from 5-amino-1-(5-phospho-D-ribosyl)imidazole-4-carboxamide (10-formyl THF route): step 1/1. It functions in the pathway purine metabolism; IMP biosynthesis via de novo pathway; IMP from 5-formamido-1-(5-phospho-D-ribosyl)imidazole-4-carboxamide: step 1/1. The chain is Bifunctional purine biosynthesis protein PurH from Lacticaseibacillus casei (strain BL23) (Lactobacillus casei).